The sequence spans 1769 residues: Tight junction protein 1 (1769 aa).

In terms of domain architecture, PDZ 1 spans 23 to 110 (TVTLHRAPGF…NAKITIRRKK (88 aa)). Positions 102 to 112 (AKITIRRKKKV) are enriched in basic residues. The disordered stretch occupies residues 102–188 (AKITIRRKKK…QPPKPTKVTL (87 aa)). Over residues 123 to 135 (PVSENEDSYDEEV) the composition is skewed to acidic residues. A Phosphoserine modification is found at Ser-125. A Phosphotyrosine modification is found at Tyr-131. Basic and acidic residues predominate over residues 148–174 (RRSEKSWARDRSASRERSLSPRSDRRS). Ser-174, Ser-177, and Ser-178 each carry phosphoserine. Thr-184 bears the Phosphothreonine mark. The 79-residue stretch at 185-263 (KVTLVKSRKN…KLKMVVQRDE (79 aa)) folds into the PDZ 2 domain. Phosphoserine occurs at positions 211 and 240. The residue at position 266 (Thr-266) is a Phosphothreonine. A phosphoserine mark is found at Ser-274, Ser-276, Ser-279, Ser-283, Ser-289, Ser-293, Ser-296, Ser-299, Ser-322, Ser-328, Ser-333, Ser-336, and Ser-352. A disordered region spans residues 295–362 (ASDHSGRSHD…TPVKHADDHT (68 aa)). Over residues 298 to 326 (HSGRSHDRPPRHSRSRSPDQRSEPSDHSR) the composition is skewed to basic and acidic residues. Residue Thr-353 is modified to Phosphothreonine. Residues 420–501 (SMKLVKFRKG…GEEVTILAQK (82 aa)) form the PDZ 3 domain. The region spanning 515–583 (GDSFYIRTHF…PNKNRAEQLA (69 aa)) is the SH3 domain. The Guanylate kinase-like domain occupies 609–790 (SKRNLRKSRE…WYGALKEAIQ (182 aa)). A phosphoserine mark is found at Ser-616 and Ser-621. Positions 632-875 (YERVVLREAG…GTPPESAITR (244 aa)) are occludin (OCLN)-binding region. Thr-808 carries the phosphothreonine modification. Residues Ser-809 and Ser-820 each carry the phosphoserine modification. Tyr-821 carries the post-translational modification Phosphotyrosine. Residues Ser-823, Ser-827, and Ser-836 each carry the phosphoserine modification. Disordered regions lie at residues 824-976 (APGS…LRTP) and 1010-1067 (EMMR…SYTD). A phosphothreonine mark is found at Thr-845, Thr-847, Thr-853, Thr-860, and Thr-867. A compositionally biased stretch (basic and acidic residues) spans 878–891 (EPVREDSSGMHHEN). Over residues 892-905 (QTYPPYSPQAQPQP) the composition is skewed to low complexity. At Ser-911 the chain carries Phosphoserine. Composition is skewed to polar residues over residues 933–952 (PETN…TLTN) and 962–976 (PSTS…LRTP). Phosphoserine is present on Ser-967. Position 1070 is a phosphoserine (Ser-1070). Disordered regions lie at residues 1091-1212 (SYYD…KAGH), 1224-1261 (PLIP…MKPQ), and 1273-1589 (KRSA…EFDS). Basic and acidic residues predominate over residues 1108–1124 (QHPRDLDSRQHPEESSE). Residue Ser-1138 is modified to Phosphoserine. 2 positions are modified to phosphotyrosine: Tyr-1139 and Tyr-1164. Residues 1150 to 1370 (RTSTLRHEEQ…FDRRSFENKP (221 aa)) form an actin-binding region (ABR) region. Basic and acidic residues predominate over residues 1273–1286 (KRSASLENKKDENH). The span at 1300–1310 (PGAPIIGPKPT) shows a compositional bias: pro residues. Residues 1335–1346 (PPEDIVRSNHYD) are compositionally biased toward basic and acidic residues. Position 1353 is a phosphotyrosine (Tyr-1353). Residue Ser-1365 is modified to Phosphoserine. A compositionally biased stretch (polar residues) spans 1387-1401 (HSQNQTNFSSYSSKG). Over residues 1402–1419 (KSPEADAPDRSFGEKRYE) the composition is skewed to basic and acidic residues. Ser-1412 bears the Phosphoserine mark. Composition is skewed to polar residues over residues 1460–1471 (NSISLDFQNSLV) and 1514–1523 (AEQTQKTVTP). The span at 1539-1548 (PFERKFESPK) shows a compositional bias: basic and acidic residues. Phosphoserine occurs at positions 1546 and 1618. The 135-residue stretch at 1635 to 1769 (ATARGVFNNN…NCVSVLIDHF (135 aa)) folds into the ZU5 domain.

Belongs to the MAGUK family. In terms of assembly, homodimer. Forms heterodimers TJP3. Forms a heterodimer (via PDZ2 domain) with TJP2/ZO2 (via PDZ2 domain). Interacts with OCLN. Interacts with CALM, claudins, CGN/cingulin, CXADR, GJA12, GJD3 and UBN1. Interacts (via ZU5 domain) with CDC42BPB and MYZAP. Interacts (via PDZ domain) with GJA1. Interacts (via PDZ domains) with ANKRD2. Interacts with POPDC1 (via the C-terminus cytoplasmic tail). Interacts with HSPA4. Interacts with KIRREL1. Interacts with DLL1. Interacts with USP53 (via the C-terminal region). Interacts with DNMBP (via C-terminal domain); required for the apical cell-cell junction localization of DNMBP. Interacts with SPEF1. Interacts (via N-terminus) with CTNNA1. Interacts with CLDN18. Interacts with CLDN16 (via TRV motif); this is a prerequisite for anchoring of CLDN16 at the tight junction. Interacts with PKP1; the interaction facilitates TJP1/ZO-1 localization to the plasma membrane. Interacts with PATJ (via PDZ1-6 domains); the interaction is required for attachment and extension of TJP1/ZO1 condensates along the apical cell interface. Post-translationally, phosphorylated at tyrosine redidues in response to epidermal growth factor (EGF). This response is dependent on an intact actin microfilament system. Dephosphorylated by PTPRJ.

It is found in the cell membrane. It localises to the cell junction. Its subcellular location is the tight junction. The protein resides in the gap junction. Its function is as follows. TJP1, TJP2, and TJP3 are closely related scaffolding proteins that link tight junction (TJ) transmembrane proteins such as claudins, junctional adhesion molecules, and occludin to the actin cytoskeleton. Forms a multistranded TJP1/ZO1 condensate which elongates to form a tight junction belt, the belt is anchored at the apical cell membrane via interaction with PATJ. The tight junction acts to limit movement of substances through the paracellular space and as a boundary between the compositionally distinct apical and basolateral plasma membrane domains of epithelial and endothelial cells. Necessary for lumenogenesis, and particularly efficient epithelial polarization and barrier formation. Plays a role in the regulation of cell migration by targeting CDC42BPBb to the leading edge of migrating cells. With TJP2 and TJP3, participates in the junctional retention and stability of the transcription factor DBPA, but is not involved in its shuttling to the nucleus. May play a role in mediating cell morphology changes during ameloblast differentiation via its role in tight junctions. The chain is Tight junction protein 1 from Canis lupus familiaris (Dog).